The chain runs to 445 residues: Ribulose bisphosphate carboxylase large chain (445 aa).

Substrate is bound by residues asparagine 89 and threonine 139. The active-site Proton acceptor is lysine 141. Lysine 143 is a substrate binding site. Mg(2+) is bound by residues lysine 167, aspartate 169, and glutamate 170. At lysine 167 the chain carries N6-carboxylysine. Histidine 260 functions as the Proton acceptor in the catalytic mechanism. Substrate contacts are provided by arginine 261, histidine 293, and serine 345.

The protein belongs to the RuBisCO large chain family. Type I subfamily. As to quaternary structure, heterohexadecamer of 8 large chains and 8 small chains; disulfide-linked. The disulfide link is formed within the large subunit homodimers. The cofactor is Mg(2+). Post-translationally, the disulfide bond which can form in the large chain dimeric partners within the hexadecamer appears to be associated with oxidative stress and protein turnover.

It is found in the plastid. The protein localises to the chloroplast. The catalysed reaction is 2 (2R)-3-phosphoglycerate + 2 H(+) = D-ribulose 1,5-bisphosphate + CO2 + H2O. It catalyses the reaction D-ribulose 1,5-bisphosphate + O2 = 2-phosphoglycolate + (2R)-3-phosphoglycerate + 2 H(+). RuBisCO catalyzes two reactions: the carboxylation of D-ribulose 1,5-bisphosphate, the primary event in carbon dioxide fixation, as well as the oxidative fragmentation of the pentose substrate in the photorespiration process. Both reactions occur simultaneously and in competition at the same active site. The sequence is that of Ribulose bisphosphate carboxylase large chain from Callicarpa dichotoma (Purple beautyberry).